The sequence spans 78 residues: Translational regulator CsrA (78 aa).

It belongs to the CsrA/RsmA family. In terms of assembly, homodimer; the beta-strands of each monomer intercalate to form a hydrophobic core, while the alpha-helices form wings that extend away from the core.

The protein localises to the cytoplasm. Its function is as follows. A translational regulator that binds mRNA to regulate translation initiation and/or mRNA stability. Usually binds in the 5'-UTR at or near the Shine-Dalgarno sequence preventing ribosome-binding, thus repressing translation. Its main target seems to be the major flagellin gene, while its function is anatagonized by FliW. The protein is Translational regulator CsrA of Desulfovibrio desulfuricans (strain ATCC 27774 / DSM 6949 / MB).